Reading from the N-terminus, the 253-residue chain is Probable transcriptional regulatory protein Synpcc7942_1017 (253 aa).

It belongs to the TACO1 family.

It is found in the cytoplasm. This Synechococcus elongatus (strain ATCC 33912 / PCC 7942 / FACHB-805) (Anacystis nidulans R2) protein is Probable transcriptional regulatory protein Synpcc7942_1017.